The chain runs to 316 residues: Dof zinc finger protein DOF5.7 (316 aa).

A disordered region spans residues 1–42 (MSSHTNLPSPKPVPKPDHRISGTSQTKKPPSSSVAQDQQNLK). Over residues 21-42 (SGTSQTKKPPSSSVAQDQQNLK) the composition is skewed to polar residues. The Dof-type zinc-finger motif lies at 41–95 (LKCPRCNSPNTKFCYYNNYSLSQPRHFCKSCRRYWTRGGALRNVPIGGGCRKTKK). Zn(2+)-binding residues include C43, C46, C68, and C71. Disordered stretches follow at residues 92–111 (KTKKSIKPNSSMNTLPSSSS) and 257–294 (NSSSPSSPTKKGDNQTEWYFGNNSDNEGVISNNANTGG). A compositionally biased stretch (low complexity) spans 101–111 (SSMNTLPSSSS). Residues 257-291 (NSSSPSSPTKKGDNQTEWYFGNNSDNEGVISNNAN) show a composition bias toward polar residues.

It is found in the nucleus. Functionally, transcription factor that binds specifically to a 5'-AA[AG]G-3' consensus core sequence. The chain is Dof zinc finger protein DOF5.7 (DOF5.7) from Arabidopsis thaliana (Mouse-ear cress).